The primary structure comprises 423 residues: Pleckstrin homology domain-containing family O member 1 (423 aa).

Disordered stretches follow at residues 1-21, 81-100, and 217-277; these read MEKN…SAQP, RKSK…AHSR, and LAAG…HSEK. Over residues 7 to 20 the composition is skewed to polar residues; the sequence is AKRGQQDGNQQSAQ. The 112-residue stretch at 20-131 folds into the PH domain; that stretch reads QPEKVGWVRK…WINALNSAIT (112 aa). Basic residues predominate over residues 83–92; that stretch reads SKSRSKKNHS. The span at 222-259 shows a compositional bias: basic and acidic residues; that stretch reads RRSDSENVKLSEKGRSGTLPRHEVTSWDKPTQRKDSLD.

In terms of processing, C-terminal fragments could be released during apoptosis via caspase-3-dependent cleavage.

Its subcellular location is the membrane. The protein localises to the nucleus. It localises to the cytoplasm. Functionally, plays a role in the regulation of the actin cytoskeleton through its interactions with actin capping protein (CP). This Gallus gallus (Chicken) protein is Pleckstrin homology domain-containing family O member 1 (PLEKHO1).